The sequence spans 331 residues: Reticulocalbin-1 (331 aa).

The first 29 residues, 1-29 (MARGGRGRRLGLALGLLLALVLAPRVLRA), serve as a signal peptide directing secretion. N-linked (GlcNAc...) asparagine glycosylation is present at asparagine 53. Serine 55 is modified (phosphoserine). Threonine 76 is modified (phosphothreonine). EF-hand domains are found at residues 79-114 (ESKE…VQKR), 115-150 (YIFD…YYLG), 166-201 (KMLP…EEFE), 203-238 (MKEI…HEEN), 244-279 (WVLS…QDYD), and 280-315 (HAQA…FVGS). At serine 80 the chain carries Phosphoserine; by FAM20C. 28 residues coordinate Ca(2+): aspartate 92, aspartate 94, aspartate 96, glutamate 103, aspartate 128, aspartate 130, aspartate 132, lysine 134, glutamate 139, aspartate 179, asparagine 181, aspartate 183, threonine 185, glutamate 190, aspartate 216, asparagine 218, aspartate 220, glutamate 227, aspartate 257, asparagine 259, aspartate 261, lysine 263, glutamate 268, aspartate 293, asparagine 295, aspartate 297, lysine 299, and glutamate 304. The Prevents secretion from ER motif lies at 328-331 (HDEL).

Belongs to the CREC family. In terms of processing, O-glycosylated. O-mannosylated by POMT1 and POMT2 and elongated by POMGNT1.

The protein localises to the endoplasmic reticulum lumen. May regulate calcium-dependent activities in the endoplasmic reticulum lumen or post-ER compartment. This chain is Reticulocalbin-1 (RCN1), found in Homo sapiens (Human).